The following is a 176-amino-acid chain: Ribosome maturation factor RimM (176 aa).

A PRC barrel domain is found at 97–176 (EDEFYWRDLI…QIIVDWDPDF (80 aa)).

This sequence belongs to the RimM family. Binds ribosomal protein uS19.

It localises to the cytoplasm. In terms of biological role, an accessory protein needed during the final step in the assembly of 30S ribosomal subunit, possibly for assembly of the head region. Essential for efficient processing of 16S rRNA. May be needed both before and after RbfA during the maturation of 16S rRNA. It has affinity for free ribosomal 30S subunits but not for 70S ribosomes. The polypeptide is Ribosome maturation factor RimM (Shewanella amazonensis (strain ATCC BAA-1098 / SB2B)).